A 197-amino-acid chain; its full sequence is Xanthine phosphoribosyltransferase (197 aa).

2 residues coordinate xanthine: Leu-20 and Asn-27. Position 128 to 132 (128 to 132 (ANGQA)) interacts with 5-phospho-alpha-D-ribose 1-diphosphate. Xanthine is bound at residue Lys-156.

This sequence belongs to the purine/pyrimidine phosphoribosyltransferase family. Xpt subfamily. In terms of assembly, homodimer.

It localises to the cytoplasm. It catalyses the reaction XMP + diphosphate = xanthine + 5-phospho-alpha-D-ribose 1-diphosphate. It functions in the pathway purine metabolism; XMP biosynthesis via salvage pathway; XMP from xanthine: step 1/1. Its function is as follows. Converts the preformed base xanthine, a product of nucleic acid breakdown, to xanthosine 5'-monophosphate (XMP), so it can be reused for RNA or DNA synthesis. The polypeptide is Xanthine phosphoribosyltransferase (Bacillus cereus (strain B4264)).